The primary structure comprises 255 residues: Proteasome subunit alpha (255 aa).

The span at 190–201 shows a compositional bias: polar residues; sequence PSTSGASGNGET. Residues 190-255 form a disordered region; sequence PSTSGASGNG…DKSSGDGEQN (66 aa). A compositionally biased stretch (basic and acidic residues) spans 202-217; it reads EPSKLEVAILDRERPG.

It belongs to the peptidase T1A family. As to quaternary structure, the 20S proteasome core is composed of 14 alpha and 14 beta subunits that assemble into four stacked heptameric rings, resulting in a barrel-shaped structure. The two inner rings, each composed of seven catalytic beta subunits, are sandwiched by two outer rings, each composed of seven alpha subunits. The catalytic chamber with the active sites is on the inside of the barrel. Has a gated structure, the ends of the cylinder being occluded by the N-termini of the alpha-subunits. Is capped by the proteasome-associated ATPase, ARC.

The protein localises to the cytoplasm. It functions in the pathway protein degradation; proteasomal Pup-dependent pathway. The formation of the proteasomal ATPase ARC-20S proteasome complex, likely via the docking of the C-termini of ARC into the intersubunit pockets in the alpha-rings, may trigger opening of the gate for substrate entry. Interconversion between the open-gate and close-gate conformations leads to a dynamic regulation of the 20S proteasome proteolysis activity. Component of the proteasome core, a large protease complex with broad specificity involved in protein degradation. The polypeptide is Proteasome subunit alpha (Saccharomonospora viridis (strain ATCC 15386 / DSM 43017 / JCM 3036 / CCUG 5913 / NBRC 12207 / NCIMB 9602 / P101) (Thermoactinomyces viridis)).